The primary structure comprises 214 residues: Nodulation protein A (214 aa).

It belongs to the NodA family.

It localises to the cytoplasm. Its function is as follows. N-acyltransferase required for nodulation. Acts in the production of a small, heat-stable compound (Nod) that stimulates mitosis in various plant protoplasts. This is Nodulation protein A from Methylobacterium nodulans (strain LMG 21967 / CNCM I-2342 / ORS 2060).